The sequence spans 720 residues: Hexanoyl-CoA synthase (720 aa).

Residues 242–262 traverse the membrane as a helical segment; it reads VDAVVIYLAIVLAGYVVVSIA. 290–293 provides a ligand contact to CoA; it reads RGKK. ATP is bound by residues 477-479, 499-504, Glu585, and Arg607; these read GEA and EMCGGT. Gly615 is a binding site for CoA. Residue Lys618 coordinates ATP. Gln681 is a CoA binding site.

This sequence belongs to the ATP-dependent AMP-binding enzyme family. Mg(2+) serves as cofactor. Accumulates in glandular trichomes, especially in female flowers. Present at low levels in roots, stems and leaves.

The protein resides in the cytoplasm. It is found in the cytosol. The protein localises to the membrane. The catalysed reaction is hexanoate + ATP + CoA = hexanoyl-CoA + AMP + diphosphate. The protein operates within secondary metabolite biosynthesis; terpenoid biosynthesis. Inhibitied by high CoA concentrations. Involved in the biosynthesis of cannabinoids-related terpenophenolic natural products, which have pharmacological activity. Acyl-activating enzyme that catalyzes the conversion of hexanoic acid to hexanoyl-CoA, precursor of the cannabinoid pathway. Can also activate other fatty acids including heptanoate, octanoate and nonanoate. In Cannabis sativa (Hemp), this protein is Hexanoyl-CoA synthase.